We begin with the raw amino-acid sequence, 141 residues long: Hemoglobin subunit alpha (141 aa).

The 141-residue stretch at 1–141 (VLSAADKTHV…VSTVLVSKYR (141 aa)) folds into the Globin domain. Serine 3 carries the phosphoserine modification. Lysine 7 carries the N6-succinyllysine modification. Threonine 8 carries the phosphothreonine modification. An N6-succinyllysine modification is found at lysine 11. Residue lysine 16 is modified to N6-acetyllysine; alternate. Lysine 16 carries the post-translational modification N6-succinyllysine; alternate. Serine 35 is subject to Phosphoserine. The residue at position 40 (lysine 40) is an N6-succinyllysine. Serine 49 is modified (phosphoserine). Histidine 58 contacts O2. Histidine 87 contacts heme b. Phosphoserine is present on serine 102. A Phosphothreonine modification is found at threonine 108. Serine 124 bears the Phosphoserine mark. Position 134 is a phosphothreonine (threonine 134). Serine 138 carries the post-translational modification Phosphoserine.

The protein belongs to the globin family. As to quaternary structure, heterotetramer of two alpha chains and two beta chains. In terms of tissue distribution, red blood cells.

In terms of biological role, involved in oxygen transport from the lung to the various peripheral tissues. Functionally, hemopressin acts as an antagonist peptide of the cannabinoid receptor CNR1. Hemopressin-binding efficiently blocks cannabinoid receptor CNR1 and subsequent signaling. The chain is Hemoglobin subunit alpha (HBA) from Dasypus novemcinctus (Nine-banded armadillo).